The chain runs to 261 residues: MTHQTHAYHMVNPSPWPLTGALSALLMTSGLIMWFHFNSTALLMLGLTTNMLTMYQWWRDIVRESTFQGHHTPTVQKGLRYGMILFIISEVLFFTGFFWAFYHSSLAPTPELGGCWPPTGIHPLNPLEVPLLNTSVLLASGVSITWAHHSLMEGNRNHMLQALFITIALGVYFTLLQASEYYEAPFTISDGVYGSTFFVATGFHGLHVIIGSTFLIVCFFRQLKFHFTSNHHFGFEAAAWYWHFVDVVWLFLYVSIYWWGS.

The Mitochondrial matrix segment spans residues 1 to 15 (MTHQTHAYHMVNPSP). A helical transmembrane segment spans residues 16-34 (WPLTGALSALLMTSGLIMW). The Mitochondrial intermembrane portion of the chain corresponds to 35–40 (FHFNST). Residues 41–66 (ALLMLGLTTNMLTMYQWWRDIVREST) traverse the membrane as a helical segment. Residues 67–72 (FQGHHT) are Mitochondrial matrix-facing. Residues 73–105 (PTVQKGLRYGMILFIISEVLFFTGFFWAFYHSS) form a helical membrane-spanning segment. Residues 106 to 128 (LAPTPELGGCWPPTGIHPLNPLE) are Mitochondrial intermembrane-facing. A helical membrane pass occupies residues 129–152 (VPLLNTSVLLASGVSITWAHHSLM). Topologically, residues 153–155 (EGN) are mitochondrial matrix. Residues 156–183 (RNHMLQALFITIALGVYFTLLQASEYYE) traverse the membrane as a helical segment. Residues 184 to 190 (APFTISD) lie on the Mitochondrial intermembrane side of the membrane. A helical membrane pass occupies residues 191-223 (GVYGSTFFVATGFHGLHVIIGSTFLIVCFFRQL). Topologically, residues 224–232 (KFHFTSNHH) are mitochondrial matrix. A helical membrane pass occupies residues 233–256 (FGFEAAAWYWHFVDVVWLFLYVSI). At 257 to 261 (YWWGS) the chain is on the mitochondrial intermembrane side.

Belongs to the cytochrome c oxidase subunit 3 family. In terms of assembly, component of the cytochrome c oxidase (complex IV, CIV), a multisubunit enzyme composed of 14 subunits. The complex is composed of a catalytic core of 3 subunits MT-CO1, MT-CO2 and MT-CO3, encoded in the mitochondrial DNA, and 11 supernumerary subunits COX4I, COX5A, COX5B, COX6A, COX6B, COX6C, COX7A, COX7B, COX7C, COX8 and NDUFA4, which are encoded in the nuclear genome. The complex exists as a monomer or a dimer and forms supercomplexes (SCs) in the inner mitochondrial membrane with NADH-ubiquinone oxidoreductase (complex I, CI) and ubiquinol-cytochrome c oxidoreductase (cytochrome b-c1 complex, complex III, CIII), resulting in different assemblies (supercomplex SCI(1)III(2)IV(1) and megacomplex MCI(2)III(2)IV(2)).

The protein localises to the mitochondrion inner membrane. The catalysed reaction is 4 Fe(II)-[cytochrome c] + O2 + 8 H(+)(in) = 4 Fe(III)-[cytochrome c] + 2 H2O + 4 H(+)(out). In terms of biological role, component of the cytochrome c oxidase, the last enzyme in the mitochondrial electron transport chain which drives oxidative phosphorylation. The respiratory chain contains 3 multisubunit complexes succinate dehydrogenase (complex II, CII), ubiquinol-cytochrome c oxidoreductase (cytochrome b-c1 complex, complex III, CIII) and cytochrome c oxidase (complex IV, CIV), that cooperate to transfer electrons derived from NADH and succinate to molecular oxygen, creating an electrochemical gradient over the inner membrane that drives transmembrane transport and the ATP synthase. Cytochrome c oxidase is the component of the respiratory chain that catalyzes the reduction of oxygen to water. Electrons originating from reduced cytochrome c in the intermembrane space (IMS) are transferred via the dinuclear copper A center (CU(A)) of subunit 2 and heme A of subunit 1 to the active site in subunit 1, a binuclear center (BNC) formed by heme A3 and copper B (CU(B)). The BNC reduces molecular oxygen to 2 water molecules using 4 electrons from cytochrome c in the IMS and 4 protons from the mitochondrial matrix. In Cephalophorus natalensis (Natal red duiker), this protein is Cytochrome c oxidase subunit 3 (MT-CO3).